The sequence spans 93 residues: Large ribosomal subunit protein uL23cz/uL23cy (93 aa).

The protein belongs to the universal ribosomal protein uL23 family. In terms of assembly, part of the 50S ribosomal subunit.

It localises to the plastid. Its subcellular location is the chloroplast. Functionally, binds to 23S rRNA. The polypeptide is Large ribosomal subunit protein uL23cz/uL23cy (rpl23-A) (Lactuca sativa (Garden lettuce)).